The chain runs to 736 residues: Catalase-1 (736 aa).

A disordered region spans residues 1-29; it reads MSNIISQAGQKAKEALTSAPSSKKVDDLK. R89 provides a ligand contact to heme. Residue H92 is part of the active site. R129 is a heme binding site. The active site involves N165. Heme contacts are provided by F178, R375, Y379, and R386. Residues 356–379 constitute a cross-link (3-(S-cysteinyl)-tyrosine (Cys-Tyr)); that stretch reads CTSHVVNGIGFSDDPLLQGRNFSY.

The protein belongs to the catalase family. Homotetramer. The cofactor is heme. Glycosylated; with alpha-glucose and/or alpha-mannose.

The protein resides in the secreted. Its subcellular location is the cell wall. It catalyses the reaction 2 H2O2 = O2 + 2 H2O. Functionally, occurs in almost all aerobically respiring organisms and serves to protect cells from the toxic effects of hydrogen peroxide. This is Catalase-1 (cat-1) from Neurospora crassa (strain ATCC 24698 / 74-OR23-1A / CBS 708.71 / DSM 1257 / FGSC 987).